The primary structure comprises 634 residues: 1-deoxy-D-xylulose-5-phosphate synthase (634 aa).

Thiamine diphosphate-binding positions include histidine 74 and alanine 115–serine 117. Aspartate 146 contacts Mg(2+). Thiamine diphosphate contacts are provided by residues glycine 147–alanine 148, asparagine 176, tyrosine 283, and glutamate 365. Residue asparagine 176 coordinates Mg(2+).

This sequence belongs to the transketolase family. DXPS subfamily. Homodimer. Requires Mg(2+) as cofactor. Thiamine diphosphate serves as cofactor.

It carries out the reaction D-glyceraldehyde 3-phosphate + pyruvate + H(+) = 1-deoxy-D-xylulose 5-phosphate + CO2. It functions in the pathway metabolic intermediate biosynthesis; 1-deoxy-D-xylulose 5-phosphate biosynthesis; 1-deoxy-D-xylulose 5-phosphate from D-glyceraldehyde 3-phosphate and pyruvate: step 1/1. Functionally, catalyzes the acyloin condensation reaction between C atoms 2 and 3 of pyruvate and glyceraldehyde 3-phosphate to yield 1-deoxy-D-xylulose-5-phosphate (DXP). The polypeptide is 1-deoxy-D-xylulose-5-phosphate synthase (Burkholderia mallei (strain ATCC 23344)).